A 198-amino-acid polypeptide reads, in one-letter code: 3-isopropylmalate dehydratase small subunit (198 aa).

The protein belongs to the LeuD family. LeuD type 1 subfamily. In terms of assembly, heterodimer of LeuC and LeuD.

It catalyses the reaction (2R,3S)-3-isopropylmalate = (2S)-2-isopropylmalate. It participates in amino-acid biosynthesis; L-leucine biosynthesis; L-leucine from 3-methyl-2-oxobutanoate: step 2/4. Functionally, catalyzes the isomerization between 2-isopropylmalate and 3-isopropylmalate, via the formation of 2-isopropylmaleate. The protein is 3-isopropylmalate dehydratase small subunit of Mycolicibacterium paratuberculosis (strain ATCC BAA-968 / K-10) (Mycobacterium paratuberculosis).